Here is a 434-residue protein sequence, read N- to C-terminus: Eukaryotic translation initiation factor 3 subunit E (434 aa).

Residues 219–392 enclose the PCI domain; the sequence is FFNHPKGRDL…GHVVMGTQPL (174 aa).

It belongs to the eIF-3 subunit E family. Component of the eukaryotic translation initiation factor 3 (eIF-3) complex. The eIF-3 complex interacts with pix. Interacts with mxt.

The protein localises to the cytoplasm. Its function is as follows. Component of the eukaryotic translation initiation factor 3 (eIF-3) complex, which is involved in protein synthesis of a specialized repertoire of mRNAs and, together with other initiation factors, stimulates binding of mRNA and methionyl-tRNAi to the 40S ribosome. The eIF-3 complex specifically targets and initiates translation of a subset of mRNAs involved in cell proliferation. The polypeptide is Eukaryotic translation initiation factor 3 subunit E (eIF3-S6) (Drosophila grimshawi (Hawaiian fruit fly)).